The sequence spans 664 residues: SPARC-like protein 1 (664 aa).

A signal peptide spans methionine 1–alanine 16. The interval serine 25 to threonine 34 is O-glycosylated at one additional site. The segment at serine 28–aspartate 360 is disordered. O-linked (GalNAc...) threonine glycans are attached at residues threonine 31 and threonine 40. Serine 44 carries O-linked (GalNAc...) serine glycosylation. The segment covering aspartate 62–serine 84 has biased composition (basic and acidic residues). 3 positions are modified to phosphoserine: serine 76, serine 84, and serine 92. Polar residues predominate over residues alanine 85–glutamate 94. Basic and acidic residues predominate over residues glycine 96–glycine 105. Threonine 116 carries O-linked (GalNAc...) threonine glycosylation. Residues leucine 120 to glutamate 136 show a composition bias toward basic and acidic residues. Residues serine 146 to serine 156 are compositionally biased toward polar residues. Residue asparagine 169 is glycosylated (N-linked (GlcNAc...) asparagine). Residues tyrosine 170 to lysine 180 show a composition bias toward basic residues. Phosphoserine is present on serine 171. 2 N-linked (GlcNAc...) asparagine glycosylation sites follow: asparagine 176 and asparagine 196. Over residues glutamine 188–asparagine 199 the composition is skewed to polar residues. Residues aspartate 216–glutamate 235 are compositionally biased toward basic and acidic residues. 2 stretches are compositionally biased toward acidic residues: residues aspartate 236–aspartate 248 and aspartate 259–asparagine 280. Residue serine 272 is modified to Phosphoserine. Asparagine 280 is a glycosylation site (N-linked (GlcNAc...) asparagine). The segment covering serine 306–valine 316 has biased composition (basic and acidic residues). The O-linked (GalNAc...) threonine glycan is linked to threonine 331. The span at aspartate 339–glycine 349 shows a compositional bias: acidic residues. Residues serine 358 and serine 365 each carry the phosphoserine modification. The interval glutamate 388–arginine 426 is disordered. A glycan (O-linked (GalNAc...) threonine) is linked at threonine 398. Residues proline 401 to glutamate 411 show a composition bias toward basic and acidic residues. N-linked (GlcNAc...) asparagine glycosylation is present at asparagine 412. At serine 420 the chain carries Phosphoserine. Residues serine 432–cysteine 454 enclose the Follistatin-like domain. 7 disulfides stabilise this stretch: cysteine 433-cysteine 444, cysteine 438-cysteine 454, cysteine 456-cysteine 490, cysteine 462-cysteine 483, cysteine 472-cysteine 509, cysteine 515-cysteine 626, and cysteine 634-cysteine 650. The region spanning glycine 450–serine 511 is the Kazal-like domain. A glycan (N-linked (GlcNAc...) asparagine) is linked at asparagine 476. An EF-hand domain is found at proline 622–aspartate 657. Residues aspartate 635, asparagine 637, aspartate 639, histidine 641, and glutamate 646 each coordinate Ca(2+).

Belongs to the SPARC family. In terms of processing, N- and O-glycosylated. O-glycosylated with a core 1 or possibly core 8 glycan. Highly expressed in lymph node, brain, heart, lung, skeletal muscle, ovary, small intestine, and colon, with lower levels in placenta, pancreas, testis, spleen, and thymus, and no expression in kidney, liver, and peripheral blood leukocytes.

It is found in the secreted. It localises to the extracellular space. The protein resides in the extracellular matrix. This Homo sapiens (Human) protein is SPARC-like protein 1 (SPARCL1).